We begin with the raw amino-acid sequence, 190 residues long: Apolipoprotein M (190 aa).

The first 17 residues, 1-17 (MFHQVWAALLYLYGLLF), serve as a signal peptide directing secretion. Intrachain disulfides connect Cys-23-Cys-169, Cys-95-Cys-185, and Cys-130-Cys-159. 2 residues coordinate tetradecanoate: Glu-138 and Arg-145.

This sequence belongs to the calycin superfamily. Lipocalin family. Highly divergent. As to quaternary structure, interacts with LRP2; LRP2 mediates APOM renal uptake and subsequent lysosomal degradation. As to expression, expressed by the liver; secreted in plasma.

It localises to the secreted. In terms of biological role, probably involved in lipid transport. Can bind sphingosine-1-phosphate, myristic acid, palmitic acid and stearic acid, retinol, all-trans-retinoic acid and 9-cis-retinoic acid. The protein is Apolipoprotein M (Apom) of Rattus norvegicus (Rat).